Here is a 281-residue protein sequence, read N- to C-terminus: Probable endonuclease 4 (281 aa).

Residues His69, His109, Glu145, Asp179, His182, His216, Asp229, His231, and Glu261 each coordinate Zn(2+).

It belongs to the AP endonuclease 2 family. Zn(2+) serves as cofactor.

It carries out the reaction Endonucleolytic cleavage to 5'-phosphooligonucleotide end-products.. Functionally, endonuclease IV plays a role in DNA repair. It cleaves phosphodiester bonds at apurinic or apyrimidinic (AP) sites, generating a 3'-hydroxyl group and a 5'-terminal sugar phosphate. The sequence is that of Probable endonuclease 4 from Yersinia enterocolitica serotype O:8 / biotype 1B (strain NCTC 13174 / 8081).